Here is a 320-residue protein sequence, read N- to C-terminus: Biotin synthase 2 (320 aa).

The Radical SAM core domain occupies 34 to 261; that stretch reads NVVQCSKLLS…ASYVRLSAGR (228 aa). [4Fe-4S] cluster contacts are provided by Cys-49, Cys-53, and Cys-56. 4 residues coordinate [2Fe-2S] cluster: Cys-93, Cys-124, Cys-184, and Arg-256.

The protein belongs to the radical SAM superfamily. Biotin synthase family. In terms of assembly, homodimer. [4Fe-4S] cluster serves as cofactor. The cofactor is [2Fe-2S] cluster.

It carries out the reaction (4R,5S)-dethiobiotin + (sulfur carrier)-SH + 2 reduced [2Fe-2S]-[ferredoxin] + 2 S-adenosyl-L-methionine = (sulfur carrier)-H + biotin + 2 5'-deoxyadenosine + 2 L-methionine + 2 oxidized [2Fe-2S]-[ferredoxin]. It participates in cofactor biosynthesis; biotin biosynthesis; biotin from 7,8-diaminononanoate: step 2/2. In terms of biological role, catalyzes the conversion of dethiobiotin (DTB) to biotin by the insertion of a sulfur atom into dethiobiotin via a radical-based mechanism. This is Biotin synthase 2 from Paracoccus denitrificans (strain Pd 1222).